The primary structure comprises 404 residues: Argininosuccinate synthase (404 aa).

ATP-binding positions include A12 to S20 and A39. L-citrulline is bound by residues Y90 and S95. Position 120 (G120) interacts with ATP. Residues T122, N126, and D127 each contribute to the L-aspartate site. N126 is a binding site for L-citrulline. L-citrulline-binding residues include R130, S181, S190, E266, and Y278.

Belongs to the argininosuccinate synthase family. Type 1 subfamily. As to quaternary structure, homotetramer.

Its subcellular location is the cytoplasm. The catalysed reaction is L-citrulline + L-aspartate + ATP = 2-(N(omega)-L-arginino)succinate + AMP + diphosphate + H(+). Its pathway is amino-acid biosynthesis; L-arginine biosynthesis; L-arginine from L-ornithine and carbamoyl phosphate: step 2/3. The sequence is that of Argininosuccinate synthase from Rhodospirillum rubrum (strain ATCC 11170 / ATH 1.1.1 / DSM 467 / LMG 4362 / NCIMB 8255 / S1).